Consider the following 431-residue polypeptide: Gamma-glutamyl phosphate reductase (431 aa).

The protein belongs to the gamma-glutamyl phosphate reductase family.

Its subcellular location is the cytoplasm. It catalyses the reaction L-glutamate 5-semialdehyde + phosphate + NADP(+) = L-glutamyl 5-phosphate + NADPH + H(+). It functions in the pathway amino-acid biosynthesis; L-proline biosynthesis; L-glutamate 5-semialdehyde from L-glutamate: step 2/2. Catalyzes the NADPH-dependent reduction of L-glutamate 5-phosphate into L-glutamate 5-semialdehyde and phosphate. The product spontaneously undergoes cyclization to form 1-pyrroline-5-carboxylate. The polypeptide is Gamma-glutamyl phosphate reductase (Methylobacterium sp. (strain 4-46)).